Consider the following 314-residue polypeptide: Cytochrome bo(3) ubiquinol oxidase subunit 2 (314 aa).

The signal sequence occupies residues 1–23 (MSKKRYPRLFGILPFLGMLLLSG). Cysteine 24 carries the N-palmitoyl cysteine lipid modification. Residue cysteine 24 is the site of S-diacylglycerol cysteine attachment. The Periplasmic segment spans residues 24-42 (CNWTLLDPKGQVGIEQKNL). Residues 43–63 (ILIATGLMLLVVIPVIIMTVV) traverse the membrane as a helical segment. The Cytoplasmic portion of the chain corresponds to 64-86 (FAWKYRASNKAATYTPDWSHSTK). The chain crosses the membrane as a helical span at residues 87-107 (IEAAVWIIPILIIIALGYFTY). Topologically, residues 108 to 314 (HSTHKLDPYR…SMQPAAGAEE (207 aa)) are periplasmic. The segment covering 278–293 (YEGMNRGRPSHEEAGS) has biased composition (basic and acidic residues). Positions 278–314 (YEGMNRGRPSHEEAGSKDLATTKGVESSMQPAAGAEE) are disordered.

This sequence belongs to the cytochrome c oxidase subunit 2 family. Heterooctamer of two A chains, two B chains, two C chains and two D chains.

It is found in the cell inner membrane. Its function is as follows. Cytochrome bo(3) ubiquinol terminal oxidase is the component of the aerobic respiratory chain of E.coli that predominates when cells are grown at high aeration. Has proton pump activity across the membrane in addition to electron transfer, pumping 2 protons/electron. The polypeptide is Cytochrome bo(3) ubiquinol oxidase subunit 2 (cyoA) (Pseudomonas putida (Arthrobacter siderocapsulatus)).